The following is a 491-amino-acid chain: Glycogen synthase 2 (491 aa).

An ADP-alpha-D-glucose-binding site is contributed by Lys16.

This sequence belongs to the glycosyltransferase 1 family. Bacterial/plant glycogen synthase subfamily.

It catalyses the reaction [(1-&gt;4)-alpha-D-glucosyl](n) + ADP-alpha-D-glucose = [(1-&gt;4)-alpha-D-glucosyl](n+1) + ADP + H(+). It functions in the pathway glycan biosynthesis; glycogen biosynthesis. Its function is as follows. Synthesizes alpha-1,4-glucan chains using ADP-glucose. The protein is Glycogen synthase 2 of Nitrosococcus oceani (strain ATCC 19707 / BCRC 17464 / JCM 30415 / NCIMB 11848 / C-107).